An 882-amino-acid polypeptide reads, in one-letter code: MTELSPKYNPAEVEAGRYQKWLDADVFKPSGDQKAKPYSIVIPPPNVTGKLHLGHAWDTTLQDIIIRQKRMQGFDTLWLPGMDHAGIATQAKVEERLREQGISRYDLGRDKFLDKVWEWKDEYATTIKEQWGKMGLSVDYSRERFTLDEGLSKAVRKVFVDLYKKGWIYRGEFIINWDPAARTALSDIEVIHKDVEGAFYHMNYMLEDGSRALQVATTRPETMFGDVAVAVNPEDPRYKDLIGKNVILPIVNKLIPIVGDEHADPEFGTGVVKITPAHDPNDFEVGQRHNLPQVNVMNDDGTMNELAGDFAGMDRFEARQATVAKLEELGALVNIEKRVHSVGHSERSGAVVEPRLSTQWFVKMDELAKQAMDNQETDNRVDFYPPRFNDTFLQWMENVHDWVISRQLWWGHQIPAWYNAEGEIYVGEEAPEGDGWTQDEDVLDTWFSSALWPFSTMGWPDTDVEDFKRYFPTSTLVTGYDIIFFWVSRMIFQSLEFTGRQPFQNVLIHGLIRDEEGRKMSKSLGNGIDPMDVIEKYGADSLRWFLSNGSAPGQDVRFSYEKMDASWNFINKIWNISRYILMNNEGLTLEEAESNVAKVAASEAGNVTDQWILHNLNETIAKVTENFDKFEFGVAGHILYNFIWEEFANWYVELTKEVLYSDNEAEKVITRSVLLYTLDKIVRLLHPIMPFVTEEIYAQYAQGSIVTVDYPVVRPAFENEAAHKGVERLKDLIRAVRNARAEVNVAPSKPITILVKTADSELEDFFTSNVNYIKRFTNPEKLEISSAIAAPELAMTSIITGAEIYLPLADLLNVEEELARLDKELAKWQKELDMVGKKLGNERFVANAKPEVIQKEKDKQADYQAKYDATQERIAEMKKIKS.

Residues 45 to 55 (PNVTGKLHLGH) carry the 'HIGH' region motif. Residues 519 to 523 (KMSKS) carry the 'KMSKS' region motif. Residue lysine 522 coordinates ATP. Positions 808-882 (LADLLNVEEE…RIAEMKKIKS (75 aa)) form a coiled coil.

It belongs to the class-I aminoacyl-tRNA synthetase family. ValS type 1 subfamily. Monomer.

The protein localises to the cytoplasm. It catalyses the reaction tRNA(Val) + L-valine + ATP = L-valyl-tRNA(Val) + AMP + diphosphate. Functionally, catalyzes the attachment of valine to tRNA(Val). As ValRS can inadvertently accommodate and process structurally similar amino acids such as threonine, to avoid such errors, it has a 'posttransfer' editing activity that hydrolyzes mischarged Thr-tRNA(Val) in a tRNA-dependent manner. In Streptococcus pyogenes serotype M28 (strain MGAS6180), this protein is Valine--tRNA ligase.